A 180-amino-acid chain; its full sequence is Ribulose bisphosphate carboxylase small subunit, chloroplastic (180 aa).

The N-terminal 57 residues, 1-57 (MASVVASAAVVTPFAASAASTTKSSQIVSVQAGLKAGVFGGKSEWQTKTQTNGSRVS), are a transit peptide targeting the chloroplast.

Belongs to the RuBisCO small chain family. In terms of assembly, heterohexadecamer of 8 large and 8 small subunits.

The protein resides in the plastid. It is found in the chloroplast. In terms of biological role, ruBisCO catalyzes two reactions: the carboxylation of D-ribulose 1,5-bisphosphate, the primary event in carbon dioxide fixation, as well as the oxidative fragmentation of the pentose substrate. Both reactions occur simultaneously and in competition at the same active site. Although the small subunit is not catalytic it is essential for maximal activity. This chain is Ribulose bisphosphate carboxylase small subunit, chloroplastic, found in Marchantia paleacea (Liverwort).